Consider the following 173-residue polypeptide: Adenine phosphoribosyltransferase (173 aa).

It belongs to the purine/pyrimidine phosphoribosyltransferase family. In terms of assembly, homodimer.

The protein localises to the cytoplasm. It carries out the reaction AMP + diphosphate = 5-phospho-alpha-D-ribose 1-diphosphate + adenine. The protein operates within purine metabolism; AMP biosynthesis via salvage pathway; AMP from adenine: step 1/1. Functionally, catalyzes a salvage reaction resulting in the formation of AMP, that is energically less costly than de novo synthesis. This is Adenine phosphoribosyltransferase from Desulfitobacterium hafniense (strain Y51).